A 126-amino-acid chain; its full sequence is Fluoride-specific ion channel FluC (126 aa).

4 helical membrane passes run 5–25, 35–55, 68–88, and 99–119; these read LHFL…WLLG, WGTL…LGLI, ALVT…AEVV, and AAGY…LGLA. Positions 75 and 78 each coordinate Na(+).

Belongs to the fluoride channel Fluc/FEX (TC 1.A.43) family.

It localises to the cell inner membrane. The catalysed reaction is fluoride(in) = fluoride(out). With respect to regulation, na(+) is not transported, but it plays an essential structural role and its presence is essential for fluoride channel function. Its function is as follows. Fluoride-specific ion channel. Important for reducing fluoride concentration in the cell, thus reducing its toxicity. In Bordetella avium (strain 197N), this protein is Fluoride-specific ion channel FluC.